The sequence spans 341 residues: Phosphate acyltransferase (341 aa).

It belongs to the PlsX family. In terms of assembly, homodimer. Probably interacts with PlsY.

The protein localises to the cytoplasm. It catalyses the reaction a fatty acyl-[ACP] + phosphate = an acyl phosphate + holo-[ACP]. It participates in lipid metabolism; phospholipid metabolism. In terms of biological role, catalyzes the reversible formation of acyl-phosphate (acyl-PO(4)) from acyl-[acyl-carrier-protein] (acyl-ACP). This enzyme utilizes acyl-ACP as fatty acyl donor, but not acyl-CoA. The polypeptide is Phosphate acyltransferase (Elusimicrobium minutum (strain Pei191)).